A 513-amino-acid polypeptide reads, in one-letter code: Serine/threonine-protein kinase pakH (513 aa).

Residues 42–294 (FEIQEKLGEG…PSQLLDHPFI (253 aa)) enclose the Protein kinase domain. ATP-binding positions include 48–56 (LGEGSFGSV) and Lys-71. Catalysis depends on Asp-163, which acts as the Proton acceptor. A disordered region spans residues 313-358 (KSKKRKSIGPSVSPKQQPNDNNNNNNNNKPQFLSKLLNNNSNSSND). Residues 331–357 (NDNNNNNNNNKPQFLSKLLNNNSNSSN) show a composition bias toward low complexity. A helical membrane pass occupies residues 493-512 (IVLYSTLGLILVLSVFFKFF).

Belongs to the protein kinase superfamily. STE Ser/Thr protein kinase family. STE20 subfamily. Requires Mg(2+) as cofactor.

It is found in the membrane. The enzyme catalyses L-seryl-[protein] + ATP = O-phospho-L-seryl-[protein] + ADP + H(+). It carries out the reaction L-threonyl-[protein] + ATP = O-phospho-L-threonyl-[protein] + ADP + H(+). The polypeptide is Serine/threonine-protein kinase pakH (pakH-1) (Dictyostelium discoideum (Social amoeba)).